The sequence spans 201 residues: Dephospho-CoA kinase (201 aa).

In terms of domain architecture, DPCK spans 7-201 (AIALSGGIGT…IETIKKDFHV (195 aa)). Position 15 to 20 (15 to 20 (GTGKST)) interacts with ATP.

The protein belongs to the CoaE family.

It localises to the cytoplasm. It carries out the reaction 3'-dephospho-CoA + ATP = ADP + CoA + H(+). Its pathway is cofactor biosynthesis; coenzyme A biosynthesis; CoA from (R)-pantothenate: step 5/5. In terms of biological role, catalyzes the phosphorylation of the 3'-hydroxyl group of dephosphocoenzyme A to form coenzyme A. The chain is Dephospho-CoA kinase from Wolinella succinogenes (strain ATCC 29543 / DSM 1740 / CCUG 13145 / JCM 31913 / LMG 7466 / NCTC 11488 / FDC 602W) (Vibrio succinogenes).